A 598-amino-acid chain; its full sequence is UvrABC system protein C (598 aa).

The region spanning 13-92 (SSPGVYLMKD…IKKYQPRYNV (80 aa)) is the GIY-YIG domain. In terms of domain architecture, UVR spans 206–241 (RSTISNLEKAIEKASQEQKFEHAAALYRTLTLIRQT).

The protein belongs to the UvrC family. In terms of assembly, interacts with UvrB in an incision complex.

Its subcellular location is the cytoplasm. Functionally, the UvrABC repair system catalyzes the recognition and processing of DNA lesions. UvrC both incises the 5' and 3' sides of the lesion. The N-terminal half is responsible for the 3' incision and the C-terminal half is responsible for the 5' incision. This chain is UvrABC system protein C, found in Chlamydia trachomatis serovar A (strain ATCC VR-571B / DSM 19440 / HAR-13).